Consider the following 538-residue polypeptide: NAD(P)H-quinone oxidoreductase chain 4 (538 aa).

The next 14 helical transmembrane spans lie at 11-31, 43-63, 95-115, 119-139, 143-163, 175-195, 217-237, 251-271, 285-305, 314-334, 340-360, 382-404, 425-445, and 472-492; these read FPWLSLSIFFPIVGALIVPFI, YALIIALITFLITVAAYFKGF, MPLILLTSFITSLAVLAAWPV, PKLFFFLILAMDGGQIAVFAV, LLFFLAWELELFPVYLFLAIW, FIIYTAGSSLFILLAGLAMGF, GFQLLCYSGLLIAFGVKLPIV, TAPVHMLLAGILLKMGGYALL, FAPLLIVLGVVNIIYAALTSF, IAYSSISHMGFVLIGIGSFSS, AMLQMVSHGLIGASLFFLVGA, IMFALWTACAFASLALPGMSGFI, IVVASLAAIGVILTPIYLLSM, and IYIIACLLVPIIGIGLYPKIM.

It belongs to the complex I subunit 4 family.

The protein resides in the cellular thylakoid membrane. The enzyme catalyses a plastoquinone + NADH + (n+1) H(+)(in) = a plastoquinol + NAD(+) + n H(+)(out). It catalyses the reaction a plastoquinone + NADPH + (n+1) H(+)(in) = a plastoquinol + NADP(+) + n H(+)(out). In terms of biological role, NDH-1 shuttles electrons from NAD(P)H, via FMN and iron-sulfur (Fe-S) centers, to quinones in the respiratory chain. The immediate electron acceptor for the enzyme in this species is believed to be plastoquinone. Couples the redox reaction to proton translocation (for every two electrons transferred, four hydrogen ions are translocated across the cytoplasmic membrane), and thus conserves the redox energy in a proton gradient. This chain is NAD(P)H-quinone oxidoreductase chain 4, found in Prochlorococcus marinus (strain NATL2A).